Here is a 373-residue protein sequence, read N- to C-terminus: UPF0725 protein At1g23950 (373 aa).

Thr-2 bears the N-acetylthreonine mark.

Belongs to the UPF0725 (EMB2204) family.

The chain is UPF0725 protein At1g23950 from Arabidopsis thaliana (Mouse-ear cress).